The following is a 265-amino-acid chain: Mlc titration factor A (265 aa).

His111, His148, His152, and Glu211 together coordinate Zn(2+).

The protein belongs to the MtfA family. In terms of assembly, interacts with Mlc. Zn(2+) is required as a cofactor.

The protein resides in the cytoplasm. Its function is as follows. Involved in the modulation of the activity of the glucose-phosphotransferase system (glucose-PTS). Interacts with the transcriptional repressor Mlc, preventing its interaction with DNA and leading to the modulation of expression of genes regulated by Mlc, including ptsG, which encodes the PTS system glucose-specific EIICB component. Shows zinc-dependent metallopeptidase activity. In Salmonella enteritidis PT4 (strain P125109), this protein is Mlc titration factor A.